The following is a 215-amino-acid chain: Pyrrolidone-carboxylate peptidase (215 aa).

Residues Glu81, Cys144, and His168 contribute to the active site.

It belongs to the peptidase C15 family. As to quaternary structure, homotetramer.

The protein resides in the cytoplasm. The catalysed reaction is Release of an N-terminal pyroglutamyl group from a polypeptide, the second amino acid generally not being Pro.. In terms of biological role, removes 5-oxoproline from various penultimate amino acid residues except L-proline. This Bacillus licheniformis (strain ATCC 14580 / DSM 13 / JCM 2505 / CCUG 7422 / NBRC 12200 / NCIMB 9375 / NCTC 10341 / NRRL NRS-1264 / Gibson 46) protein is Pyrrolidone-carboxylate peptidase.